A 90-amino-acid polypeptide reads, in one-letter code: MNKNELVAAVADKAGLSKADASSAVDAVFETIQGELKNGGDIRLVGFGNFSVSRREASKGRNPSTGAEVDIPARNVPKFTAGKGLKDAVN.

This sequence belongs to the bacterial histone-like protein family.

Its function is as follows. Histone-like DNA-binding protein which is capable of wrapping DNA to stabilize it, and thus to prevent its denaturation under extreme environmental conditions. This is DNA-binding protein HRm (hupB) from Rhizobium meliloti (strain 1021) (Ensifer meliloti).